We begin with the raw amino-acid sequence, 323 residues long: 8-oxo-dGDP phosphatase NUDT18 (323 aa).

The 131-residue stretch at 37–167 folds into the Nudix hydrolase domain; sequence RLRKNVCYVV…DVLHLVELGA (131 aa). Leucine 58 contributes to the Mg(2+) binding site. The short motif at 76–97 is the Nudix box element; it reads GRMEPGETIVEAMQREVKEEAG.

It belongs to the Nudix hydrolase family. Mn(2+) serves as cofactor. The cofactor is Mg(2+).

It catalyses the reaction 8-oxo-dGDP + H2O = 8-oxo-dGMP + phosphate + H(+). It carries out the reaction 8-oxo-dADP + H2O = 8-oxo-dAMP + phosphate + H(+). The catalysed reaction is 2-oxo-dADP + H2O = 2-oxo-dAMP + phosphate + H(+). The enzyme catalyses 8-oxo-GDP + H2O = 8-oxo-GMP + phosphate + H(+). Functionally, mediates the hydrolysis of oxidized nucleoside diphosphate derivatives. Hydrolyzes 8-oxo-7,8-dihydroguanine (8-oxo-Gua)-containing deoxyribo- and ribonucleoside diphosphates to the monophosphates. Hydrolyzes 8-oxo-dGDP and 8-oxo-GDP with the same efficiencies. Also hydrolyzes 8-OH-dADP and 2-OH-dADP. Exhibited no or minimal hydrolysis activity against 8-oxo-dGTP, 8-oxo-GTP, dGTP, GTP, dGDP and GDP. Probably removes oxidized guanine nucleotides from both the DNA and RNA precursor pools. This chain is 8-oxo-dGDP phosphatase NUDT18, found in Mus musculus (Mouse).